Reading from the N-terminus, the 335-residue chain is Galactosylgalactosylxylosylprotein 3-beta-glucuronosyltransferase 3 (335 aa).

The Cytoplasmic segment spans residues 1-7 (MKLKLKN). The helical; Signal-anchor for type II membrane protein transmembrane segment at 8–28 (VFLAYFLVSIAGLLYALVQLG) threads the bilayer. Over 29 to 335 (QPCDCLPPLR…GRGSDPAIEV (307 aa)) the chain is Lumenal. Residues 82-84 (PTY), Asp113, Arg156, Arg161, and 194-196 (DDD) contribute to the UDP-alpha-D-glucuronate site. Asp196 provides a ligand contact to Mn(2+). Residues 243–252 (WEPSRPFPVD) form an interaction with galactose moiety of substrate glycoprotein region. Catalysis depends on Glu281, which acts as the Proton donor/acceptor. The N-linked (GlcNAc...) asparagine glycan is linked to Asn300. 308 to 310 (HTR) contributes to the UDP-alpha-D-glucuronate binding site. Over residues 312–322 (EKPKMKQEEQL) the composition is skewed to basic and acidic residues. A disordered region spans residues 312–335 (EKPKMKQEEQLQRQGRGSDPAIEV).

The protein belongs to the glycosyltransferase 43 family. In terms of assembly, homodimer; disulfide-linked. Interacts with PXYLP1; the interaction increases the 2-phosphoxylose phosphatase activity of PXYLP1 during completion of linkage region formation in a B3GAT3-mediated manner. It depends on Mn(2+) as a cofactor. In terms of processing, N-glycosylated. In terms of tissue distribution, ubiquitous (but weakly expressed in all tissues examined).

Its subcellular location is the golgi apparatus membrane. The protein resides in the golgi apparatus. It localises to the cis-Golgi network. The enzyme catalyses 3-O-(beta-D-galactosyl-(1-&gt;3)-beta-D-galactosyl-(1-&gt;4)-beta-D-xylosyl)-L-seryl-[protein] + UDP-alpha-D-glucuronate = 3-O-(beta-D-GlcA-(1-&gt;3)-beta-D-Gal-(1-&gt;3)-beta-D-Gal-(1-&gt;4)-beta-D-Xyl)-L-seryl-[protein] + UDP + H(+). The protein operates within protein modification; protein glycosylation. With respect to regulation, inhibited by EDTA. Functionally, glycosaminoglycans biosynthesis. Involved in forming the linkage tetrasaccharide present in heparan sulfate and chondroitin sulfate. Transfers a glucuronic acid moiety from the uridine diphosphate-glucuronic acid (UDP-GlcUA) to the common linkage region trisaccharide Gal-beta-1,3-Gal-beta-1,4-Xyl covalently bound to a Ser residue at the glycosaminylglycan attachment site of proteoglycans. Can also play a role in the biosynthesis of l2/HNK-1 carbohydrate epitope on glycoproteins. Shows strict specificity for Gal-beta-1,3-Gal-beta-1,4-Xyl, exhibiting negligible incorporation into other galactoside substrates including Galbeta1-3Gal beta1-O-benzyl, Galbeta1-4GlcNAc and Galbeta1-4Glc. Stimulates 2-phosphoxylose phosphatase activity of PXYLP1 in presence of uridine diphosphate-glucuronic acid (UDP-GlcUA) during completion of linkage region formation. The polypeptide is Galactosylgalactosylxylosylprotein 3-beta-glucuronosyltransferase 3 (B3GAT3) (Homo sapiens (Human)).